Consider the following 145-residue polypeptide: Antiholin-like protein LrgA (145 aa).

The next 4 membrane-spanning stretches (helical) occupy residues 10-30 (PAHF…SKII), 33-53 (FMPI…VLLC), 72-92 (NIGL…GVIS), and 96-116 (FLII…TGYV).

This sequence belongs to the CidA/LrgA family. LrgA subfamily.

It localises to the cell membrane. Inhibits the expression or activity of extracellular murein hydrolases by interacting, possibly with LrgB, with the holin-like proteins CidA and/or CidB. The LrgAB and CidAB proteins may affect the proton motive force of the membrane. May be involved in programmed cell death (PCD), possibly triggering PCD in response to antibiotics and environmental stresses. The chain is Antiholin-like protein LrgA from Staphylococcus aureus (strain Mu3 / ATCC 700698).